The following is a 273-amino-acid chain: Nitrogenase iron protein (273 aa).

8–15 (GKGGIGKS) contributes to the ATP binding site. C95 is a binding site for [4Fe-4S] cluster. Position 98 is an ADP-ribosylarginine; by dinitrogenase reductase ADP-ribosyltransferase (R98). A [4Fe-4S] cluster-binding site is contributed by C130.

Belongs to the NifH/BchL/ChlL family. As to quaternary structure, homodimer. Requires [4Fe-4S] cluster as cofactor. In terms of processing, the reversible ADP-ribosylation of Arg-98 inactivates the nitrogenase reductase and regulates nitrogenase activity.

It catalyses the reaction N2 + 8 reduced [2Fe-2S]-[ferredoxin] + 16 ATP + 16 H2O = H2 + 8 oxidized [2Fe-2S]-[ferredoxin] + 2 NH4(+) + 16 ADP + 16 phosphate + 6 H(+). In terms of biological role, the key enzymatic reactions in nitrogen fixation are catalyzed by the nitrogenase complex, which has 2 components: the iron protein and the molybdenum-iron protein. The polypeptide is Nitrogenase iron protein (Roseiflexus sp. (strain RS-1)).